A 492-amino-acid polypeptide reads, in one-letter code: Forkhead box protein O6 (492 aa).

4 disordered regions span residues 1-76, 163-235, 315-338, and 466-492; these read MAAK…EVGP, SWWM…ASPA, GAGLPEGLLDGAQDAYGPRPAPRP, and FNFDSALPPPPPGLAGAPPPNQSWVPG. A DNA-binding region (fork-head) is located at residues 88 to 182; that stretch reads WGNLSYADLI…KTGKTPRRRA (95 aa). A Phosphoserine modification is found at S184. Residues 192–203 show a composition bias toward basic residues; sequence LRIKGKASKKKQ. Positions 225–235 are enriched in low complexity; it reads PAAAKWAASPA. A compositionally biased stretch (pro residues) spans 472–486; the sequence is LPPPPPGLAGAPPPN.

Post-translationally, phosphorylation of Ser-184 is be important in regulating the transacriptional activity.

The protein localises to the cytoplasm. It is found in the nucleus. Functionally, transcriptional activator. The protein is Forkhead box protein O6 (FOXO6) of Homo sapiens (Human).